The following is a 345-amino-acid chain: uncharacterized protein (345 aa).

Disordered regions lie at residues 1–58 and 139–165; these read MPSP…WRGD and KTNS…NSPK. Residues 27 to 39 show a composition bias toward basic and acidic residues; that stretch reads IKGEGSDDGKEKS. Positions 154 to 165 are enriched in polar residues; that stretch reads KQGSAESKNSPK.

The protein belongs to the MG307/MG309/MG338 family.

This is an uncharacterized protein from Mycoplasma pneumoniae (strain ATCC 29342 / M129 / Subtype 1) (Mycoplasmoides pneumoniae).